Reading from the N-terminus, the 248-residue chain is UPF0736 protein BCE33L1074 (248 aa).

Belongs to the UPF0736 family.

The chain is UPF0736 protein BCE33L1074 from Bacillus cereus (strain ZK / E33L).